The chain runs to 311 residues: Methionyl-tRNA formyltransferase (311 aa).

110–113 (SLLP) lines the (6S)-5,6,7,8-tetrahydrofolate pocket.

Belongs to the Fmt family.

It carries out the reaction L-methionyl-tRNA(fMet) + (6R)-10-formyltetrahydrofolate = N-formyl-L-methionyl-tRNA(fMet) + (6S)-5,6,7,8-tetrahydrofolate + H(+). In terms of biological role, attaches a formyl group to the free amino group of methionyl-tRNA(fMet). The formyl group appears to play a dual role in the initiator identity of N-formylmethionyl-tRNA by promoting its recognition by IF2 and preventing the misappropriation of this tRNA by the elongation apparatus. This Streptococcus agalactiae serotype Ia (strain ATCC 27591 / A909 / CDC SS700) protein is Methionyl-tRNA formyltransferase.